The sequence spans 408 residues: Arginine biosynthesis bifunctional protein ArgJ (408 aa).

Residues Thr156, Lys182, Thr193, Glu279, Asn403, and Ser408 each coordinate substrate. Residue Thr193 is the Nucleophile of the active site.

Belongs to the ArgJ family. Heterotetramer of two alpha and two beta chains.

Its subcellular location is the cytoplasm. It carries out the reaction N(2)-acetyl-L-ornithine + L-glutamate = N-acetyl-L-glutamate + L-ornithine. The catalysed reaction is L-glutamate + acetyl-CoA = N-acetyl-L-glutamate + CoA + H(+). Its pathway is amino-acid biosynthesis; L-arginine biosynthesis; L-ornithine and N-acetyl-L-glutamate from L-glutamate and N(2)-acetyl-L-ornithine (cyclic): step 1/1. It functions in the pathway amino-acid biosynthesis; L-arginine biosynthesis; N(2)-acetyl-L-ornithine from L-glutamate: step 1/4. In terms of biological role, catalyzes two activities which are involved in the cyclic version of arginine biosynthesis: the synthesis of N-acetylglutamate from glutamate and acetyl-CoA as the acetyl donor, and of ornithine by transacetylation between N(2)-acetylornithine and glutamate. This is Arginine biosynthesis bifunctional protein ArgJ from Bordetella pertussis (strain Tohama I / ATCC BAA-589 / NCTC 13251).